We begin with the raw amino-acid sequence, 201 residues long: Recombination protein RecR (201 aa).

Residues 57 to 72 form a C4-type zinc finger; sequence CADCRTFTEQDVCNIC. Residues 81 to 176 enclose the Toprim domain; the sequence is GQICVVESPA…EASRIAHGVP (96 aa).

The protein belongs to the RecR family.

Its function is as follows. May play a role in DNA repair. It seems to be involved in an RecBC-independent recombinational process of DNA repair. It may act with RecF and RecO. This Salmonella agona (strain SL483) protein is Recombination protein RecR.